The primary structure comprises 201 residues: MTDRDRQPEDTTAPTGEPVVSKPYIMPDDPEPGSVELLQKEAAEARDRMLRTLAEMENLRKRTTKEVADARLYGITGFARDVLDIADNLQRALDAVPAEARAAADPGLTSLIEGVELTERSLLNALEKHGVKKFDPQGQKFDPNFQQAMFEVPDASVPAGTVVQVMQAGYTIGERVLRPALVGVAKGGAKAASAANSNEVN.

The tract at residues 1 to 32 (MTDRDRQPEDTTAPTGEPVVSKPYIMPDDPEP) is disordered.

Belongs to the GrpE family. Homodimer.

The protein resides in the cytoplasm. Functionally, participates actively in the response to hyperosmotic and heat shock by preventing the aggregation of stress-denatured proteins, in association with DnaK and GrpE. It is the nucleotide exchange factor for DnaK and may function as a thermosensor. Unfolded proteins bind initially to DnaJ; upon interaction with the DnaJ-bound protein, DnaK hydrolyzes its bound ATP, resulting in the formation of a stable complex. GrpE releases ADP from DnaK; ATP binding to DnaK triggers the release of the substrate protein, thus completing the reaction cycle. Several rounds of ATP-dependent interactions between DnaJ, DnaK and GrpE are required for fully efficient folding. This is Protein GrpE from Bradyrhizobium diazoefficiens (strain JCM 10833 / BCRC 13528 / IAM 13628 / NBRC 14792 / USDA 110).